A 95-amino-acid polypeptide reads, in one-letter code: Small ribosomal subunit protein bS16 (95 aa).

Belongs to the bacterial ribosomal protein bS16 family.

The protein is Small ribosomal subunit protein bS16 of Mycoplasma genitalium (strain ATCC 33530 / DSM 19775 / NCTC 10195 / G37) (Mycoplasmoides genitalium).